A 610-amino-acid polypeptide reads, in one-letter code: Oxidoreductase ptaE (610 aa).

A signal peptide spans 1–20 (MFQSILFLAFYGRPVFGSAA). Plastocyanin-like domains lie at 67–181 (QIIS…HGPS) and 191–344 (PWLL…IVRY). N-linked (GlcNAc...) asparagine glycosylation is found at N105, N111, N262, N277, N330, N356, N401, N409, N427, and N602. Residues 425-568 (YVNWSEPSVK…IAIQFLEQPS (144 aa)) enclose the Plastocyanin-like 3 domain.

It belongs to the multicopper oxidase family.

It participates in secondary metabolite biosynthesis. Oxidoreductase; part of the gene cluster that mediates the biosynthesis of pestheic acid, a diphenyl ether which is a biosynthetic precursor of the unique chloropupukeananes. The biosynthesis initiates from condensation of acetate and malonate units catalyzed by the non-reducing PKS ptaA. As the ptaA protein is TE/CLC domain-deficient, hydrolysis and Claisen cyclization of the polyketide could be catalyzed by ptaB containing a beta-lactamase domain. The ptaB protein might hydrolyze the thioester bond between the ACP of ptaA and the intermediate to release atrochrysone carboxylic acid, which is spontaneously dehydrated to form endocrocin anthrone. Endocrocin anthrone is then converted to endocrocin, catalyzed by the anthrone oxygenase ptaC. Spontaneous decarboxylation of endocrocin occurs to generate emodin. An O-methyltransferase (ptaH or ptaI) could methylate emodin to form physcion. PtaJ could then catalyze the oxidative cleavage of physcion, and rotation of the intermediate could then afford desmethylisosulochrin. PtaF, a putative NADH-dependent oxidoreductase, might also participate in the oxidative cleavage step. Desmethylisosulochrin is then transformed by another O-methyltransferase (ptaH or ptaI) to form isosulochrin. Chlorination of isosulochrin by ptaM in the cyclohexadienone B ring then produces chloroisosulochrin. PtaE is responsible for the oxidative coupling reactions of both benzophenones isosulouchrin and chloroisosulochrin to RES-1214-1 and pestheic acid respectively, regardless of chlorination. This is Oxidoreductase ptaE from Pestalotiopsis fici (strain W106-1 / CGMCC3.15140).